Consider the following 298-residue polypeptide: Lipoyl synthase (298 aa).

[4Fe-4S] cluster-binding residues include C43, C48, C54, C69, C73, C76, and S280. The 215-residue stretch at 55–269 (FSSGTATFLI…AACGRGMGIP (215 aa)) folds into the Radical SAM core domain.

It belongs to the radical SAM superfamily. Lipoyl synthase family. [4Fe-4S] cluster serves as cofactor.

It is found in the cytoplasm. The catalysed reaction is [[Fe-S] cluster scaffold protein carrying a second [4Fe-4S](2+) cluster] + N(6)-octanoyl-L-lysyl-[protein] + 2 oxidized [2Fe-2S]-[ferredoxin] + 2 S-adenosyl-L-methionine + 4 H(+) = [[Fe-S] cluster scaffold protein] + N(6)-[(R)-dihydrolipoyl]-L-lysyl-[protein] + 4 Fe(3+) + 2 hydrogen sulfide + 2 5'-deoxyadenosine + 2 L-methionine + 2 reduced [2Fe-2S]-[ferredoxin]. It participates in protein modification; protein lipoylation via endogenous pathway; protein N(6)-(lipoyl)lysine from octanoyl-[acyl-carrier-protein]: step 2/2. Functionally, catalyzes the radical-mediated insertion of two sulfur atoms into the C-6 and C-8 positions of the octanoyl moiety bound to the lipoyl domains of lipoate-dependent enzymes, thereby converting the octanoylated domains into lipoylated derivatives. The polypeptide is Lipoyl synthase (Nitratidesulfovibrio vulgaris (strain DP4) (Desulfovibrio vulgaris)).